The following is a 362-amino-acid chain: Phospho-N-acetylmuramoyl-pentapeptide-transferase (362 aa).

10 helical membrane-spanning segments follow: residues 28–48 (AACM…IRWL), 72–92 (GTPT…TLLW), 100–120 (VWAV…DDYL), 134–154 (VKLI…MSLT), 170–190 (VLIP…MGAS), 201–221 (GLAI…AYLV), 241–261 (LTVF…FNAP), 265–285 (VFMG…VAIA), 290–310 (IVLA…IVQV), and 339–359 (TIVI…LATL).

This sequence belongs to the glycosyltransferase 4 family. MraY subfamily. It depends on Mg(2+) as a cofactor.

The protein resides in the cell inner membrane. It carries out the reaction UDP-N-acetyl-alpha-D-muramoyl-L-alanyl-gamma-D-glutamyl-meso-2,6-diaminopimeloyl-D-alanyl-D-alanine + di-trans,octa-cis-undecaprenyl phosphate = di-trans,octa-cis-undecaprenyl diphospho-N-acetyl-alpha-D-muramoyl-L-alanyl-D-glutamyl-meso-2,6-diaminopimeloyl-D-alanyl-D-alanine + UMP. It functions in the pathway cell wall biogenesis; peptidoglycan biosynthesis. In terms of biological role, catalyzes the initial step of the lipid cycle reactions in the biosynthesis of the cell wall peptidoglycan: transfers peptidoglycan precursor phospho-MurNAc-pentapeptide from UDP-MurNAc-pentapeptide onto the lipid carrier undecaprenyl phosphate, yielding undecaprenyl-pyrophosphoryl-MurNAc-pentapeptide, known as lipid I. The chain is Phospho-N-acetylmuramoyl-pentapeptide-transferase from Granulibacter bethesdensis (strain ATCC BAA-1260 / CGDNIH1).